The following is a 419-amino-acid chain: Erythromycin esterase type II (419 aa).

This enzyme confers resistance to erythromycin through inactivation by hydrolyzing the lactone ring of the antibiotic. This chain is Erythromycin esterase type II (ereB), found in Escherichia coli.